A 340-amino-acid polypeptide reads, in one-letter code: 4-hydroxy-3-methylbut-2-enyl diphosphate reductase (340 aa).

C19 lines the [4Fe-4S] cluster pocket. H50 and H90 together coordinate (2E)-4-hydroxy-3-methylbut-2-enyl diphosphate. Dimethylallyl diphosphate-binding residues include H50 and H90. Residues H50 and H90 each coordinate isopentenyl diphosphate. [4Fe-4S] cluster is bound at residue C112. H141 serves as a coordination point for (2E)-4-hydroxy-3-methylbut-2-enyl diphosphate. H141 serves as a coordination point for dimethylallyl diphosphate. Residue H141 coordinates isopentenyl diphosphate. Catalysis depends on E143, which acts as the Proton donor. T190 contacts (2E)-4-hydroxy-3-methylbut-2-enyl diphosphate. Residue C220 coordinates [4Fe-4S] cluster. S248, S249, N250, and S292 together coordinate (2E)-4-hydroxy-3-methylbut-2-enyl diphosphate. Residues S248, S249, N250, and S292 each contribute to the dimethylallyl diphosphate site. The isopentenyl diphosphate site is built by S248, S249, N250, and S292.

The protein belongs to the IspH family. [4Fe-4S] cluster serves as cofactor.

It carries out the reaction isopentenyl diphosphate + 2 oxidized [2Fe-2S]-[ferredoxin] + H2O = (2E)-4-hydroxy-3-methylbut-2-enyl diphosphate + 2 reduced [2Fe-2S]-[ferredoxin] + 2 H(+). The catalysed reaction is dimethylallyl diphosphate + 2 oxidized [2Fe-2S]-[ferredoxin] + H2O = (2E)-4-hydroxy-3-methylbut-2-enyl diphosphate + 2 reduced [2Fe-2S]-[ferredoxin] + 2 H(+). Its pathway is isoprenoid biosynthesis; dimethylallyl diphosphate biosynthesis; dimethylallyl diphosphate from (2E)-4-hydroxy-3-methylbutenyl diphosphate: step 1/1. It functions in the pathway isoprenoid biosynthesis; isopentenyl diphosphate biosynthesis via DXP pathway; isopentenyl diphosphate from 1-deoxy-D-xylulose 5-phosphate: step 6/6. Catalyzes the conversion of 1-hydroxy-2-methyl-2-(E)-butenyl 4-diphosphate (HMBPP) into a mixture of isopentenyl diphosphate (IPP) and dimethylallyl diphosphate (DMAPP). Acts in the terminal step of the DOXP/MEP pathway for isoprenoid precursor biosynthesis. This is 4-hydroxy-3-methylbut-2-enyl diphosphate reductase from Thermus thermophilus (strain ATCC BAA-163 / DSM 7039 / HB27).